The primary structure comprises 1008 residues: CRAL-TRIO domain-containing protein C23B6.04c (1008 aa).

Disordered stretches follow at residues methionine 1–glutamate 247, aspartate 284–serine 306, and glutamine 374–lysine 514. Over residues threonine 79–threonine 110 the composition is skewed to polar residues. Basic and acidic residues-rich tracts occupy residues arginine 111 to alanine 131 and methionine 170 to leucine 187. Polar residues-rich tracts occupy residues glutamine 374–asparagine 389, aspartate 397–lysine 432, glycine 467–serine 478, and glycine 495–asparagine 505. A phosphoserine mark is found at serine 525 and serine 559. Residues glutamate 675–tyrosine 828 enclose the CRAL-TRIO domain. Positions serine 883–proline 982 are disordered. The segment covering threonine 885 to threonine 899 has biased composition (low complexity). A phosphoserine mark is found at serine 888 and serine 890. The span at serine 914–glycine 931 shows a compositional bias: basic and acidic residues.

It is found in the cell membrane. The sequence is that of CRAL-TRIO domain-containing protein C23B6.04c from Schizosaccharomyces pombe (strain 972 / ATCC 24843) (Fission yeast).